Here is a 345-residue protein sequence, read N- to C-terminus: Ferrochelatase (345 aa).

Positions 215 and 296 each coordinate Fe cation.

Belongs to the ferrochelatase family.

The protein localises to the cytoplasm. It carries out the reaction heme b + 2 H(+) = protoporphyrin IX + Fe(2+). It participates in porphyrin-containing compound metabolism; protoheme biosynthesis; protoheme from protoporphyrin-IX: step 1/1. Catalyzes the ferrous insertion into protoporphyrin IX. The protein is Ferrochelatase of Rhodopseudomonas palustris (strain BisA53).